The following is an 818-amino-acid chain: Myosin-A (818 aa).

Phosphoserine; by PKG is present on Ser19. One can recognise a Myosin motor domain in the interval Met97 to Arg771. Gly191–Thr198 contributes to the ATP binding site. Residues Pro661–Glu671 are actin-binding. The tract at residues Lys773 to Gln818 is tail.

Belongs to the TRAFAC class myosin-kinesin ATPase superfamily. Myosin family. As to quaternary structure, component of the glideosome complex composed of GAP50, GAP45, MTIP and MyoA; the complex is formed during the late schizont stage and in merozoites. MyoA, MTIP and GAP45 probably form an initial complex in the cytoplasm which is then recruited to the outer face of the inner membrane complex via the interaction with GAP50. Interacts with ACT1.

The protein localises to the cell membrane. Myosins are actin-based motor molecules with ATPase activity. Unconventional myosins serve in intracellular movements. Their highly divergent tails are presumed to bind to membranous compartments, which would be moved relative to actin filaments. The polypeptide is Myosin-A (Plasmodium falciparum (isolate 3D7)).